A 1281-amino-acid chain; its full sequence is Protein ETHYLENE-INSENSITIVE 2 (1281 aa).

At 1–21 (MDGQQLRSSESPASGGGGVTG) the chain is on the cytoplasmic side. The helical transmembrane segment at 22–42 (GGAPHLFHALGPALLISIGYI) threads the bilayer. At 43–61 (DLGKWVAAVEAGSRFGLDL) the chain is on the extracellular side. Residues 62–82 (VLLALLFNFMAILCQYLAACI) traverse the membrane as a helical segment. Topologically, residues 83 to 112 (GTVTGRSLAEICHQEYSRPTCIFLGVQAGL) are cytoplasmic. Residues 113-133 (SLLTSELTMIFGIALGFNLLF) traverse the membrane as a helical segment. The Extracellular portion of the chain corresponds to 134 to 137 (EYDD). A helical membrane pass occupies residues 138–158 (LITGICFATVVPNLLPYAISH). Residues 159-163 (LGKKM) lie on the Cytoplasmic side of the membrane. Residues 164-184 (VGTLNACIAGFALLCYVLGLL) form a helical membrane-spanning segment. The Extracellular portion of the chain corresponds to 185 to 208 (VSQPQIPLTTNVIFPKLSGESAYS). A helical transmembrane segment spans residues 209–229 (LMALLGANVMAHNFYIHSSVV). The Cytoplasmic segment spans residues 230 to 238 (QGQKRSAFA). The chain crosses the membrane as a helical span at residues 239–259 (VGALFHDHLFSVLFIFTGIFL). At 260–297 (VNHVLMNSAAADSTNTLLLTFQDVVELMNQIFVNPMAP) the chain is on the extracellular side. A helical membrane pass occupies residues 298–318 (TIFLVVLLFSSHIISLTSAIG). Residues 319–325 (SQVISQH) are Cytoplasmic-facing. A helical membrane pass occupies residues 326–346 (LFGINLPLSGHHLILKAFAIV). The Extracellular portion of the chain corresponds to 347–362 (PALYCAKVAGAEGIYQ). A helical membrane pass occupies residues 363–383 (LLIICQIIQAMLLPSSVVPLF). Residues 384 to 400 (RVASSRLIMGAHRVSLH) lie on the Cytoplasmic side of the membrane. A helical membrane pass occupies residues 401–421 (LEILTFLAFLLMLFSNIIFMA). The Extracellular portion of the chain corresponds to 422-447 (EMLFGDSGWLNTLKGNTGSPVVFPST). Residues 448-468 (VLITVACVSVAFSLYMAVTPL) form a helical membrane-spanning segment. Residues 469 to 1281 (KSGSHEAELQ…KRRLSSKGQQ (813 aa)) lie on the Cytoplasmic side of the membrane. 2 disordered regions span residues 540-565 (IESD…SPSF) and 593-665 (ESTV…NGSG). The span at 548–557 (HSTAHTSTAP) shows a compositional bias: polar residues. Positions 599-610 (VDSKSTGERDIE) are enriched in basic and acidic residues.

Belongs to the NRAMP (TC 2.A.55) family. As to expression, expressed in roots, leaf sheaths, leaf blades, flowers, developing seeds, germinating seeds and young seedlings. Expressed in adventitious roots, vascular tissues of the seminal roots, lateral roots, the connecting region between vascular tissues and lateral roots, mature leaf, mature stem, tips of adventitious roots derived from the node, shoot apex, young panicle, anthers, pistil, stigma, ovary, seed coat and fruit coat pericarp.

Its subcellular location is the membrane. Central factor in ethylene signaling pathways that control development, senescence and grain size. Acts as a positive component of the ethylene-signaling pathway. The protein is Protein ETHYLENE-INSENSITIVE 2 of Oryza sativa subsp. japonica (Rice).